Consider the following 586-residue polypeptide: Aspartate--tRNA(Asp/Asn) ligase (586 aa).

Glutamate 176 contributes to the L-aspartate binding site. Residues glutamine 200–lysine 203 form an aspartate region. Arginine 222 lines the L-aspartate pocket. Residues arginine 222–glutamate 224 and glutamine 231 each bind ATP. Histidine 449 lines the L-aspartate pocket. Glutamate 483 contacts ATP. Arginine 490 lines the L-aspartate pocket. Glycine 535 to arginine 538 lines the ATP pocket.

Belongs to the class-II aminoacyl-tRNA synthetase family. Type 1 subfamily. In terms of assembly, homodimer.

It is found in the cytoplasm. The catalysed reaction is tRNA(Asx) + L-aspartate + ATP = L-aspartyl-tRNA(Asx) + AMP + diphosphate. In terms of biological role, aspartyl-tRNA synthetase with relaxed tRNA specificity since it is able to aspartylate not only its cognate tRNA(Asp) but also tRNA(Asn). Reaction proceeds in two steps: L-aspartate is first activated by ATP to form Asp-AMP and then transferred to the acceptor end of tRNA(Asp/Asn). This chain is Aspartate--tRNA(Asp/Asn) ligase, found in Brachyspira hyodysenteriae (strain ATCC 49526 / WA1).